The following is a 423-amino-acid chain: COP9 signalosome complex subunit 3 (423 aa).

The region spanning 197-365 is the PCI domain; that stretch reads NFERALYFYE…GMVCFHDNPE (169 aa). Residues 403 to 423 form a disordered region; sequence FVQKSMGSQDDDSGSKPSSYS.

The protein belongs to the CSN3 family. In terms of assembly, component of the CSN complex, probably composed of cops1, cops2, cops3, cops4, cops5, cops6, cops7, cops8 and cops9.

The protein resides in the cytoplasm. It is found in the nucleus. Its function is as follows. Component of the COP9 signalosome complex (CSN), a complex involved in various cellular and developmental processes. The CSN complex is an essential regulator of the ubiquitin (Ubl) conjugation pathway by mediating the deneddylation of the cullin subunits of E3 ligase complexes, leading to modify the Ubl ligase activity. The protein is COP9 signalosome complex subunit 3 (cops3) of Xenopus tropicalis (Western clawed frog).